A 125-amino-acid polypeptide reads, in one-letter code: Ribosome-binding factor A (125 aa).

It belongs to the RbfA family. As to quaternary structure, monomer. Binds 30S ribosomal subunits, but not 50S ribosomal subunits or 70S ribosomes.

It is found in the cytoplasm. One of several proteins that assist in the late maturation steps of the functional core of the 30S ribosomal subunit. Associates with free 30S ribosomal subunits (but not with 30S subunits that are part of 70S ribosomes or polysomes). Required for efficient processing of 16S rRNA. May interact with the 5'-terminal helix region of 16S rRNA. This is Ribosome-binding factor A from Acidovorax sp. (strain JS42).